Reading from the N-terminus, the 462-residue chain is MDKDSQGLLDSSLMASGTASRSEDEESLAGQKRASSQALGTIPKRRSSSRFIKRKKFDDELVESSLAKSSTRAKGASGVEPGRCSGSEPSSSEKKKVSKAPSTPVPPSPAPAPGLTKRVKKSKQPLQVTKDLGRWKPADDLLLINAVLQTNDLTSVHLGVKFSCRFTLREVQERWYALLYDPVISKLACQAMRQLHPEAIAAIQSKALFSKAEEQLLSKVGSTSQPTLETFQDLLHRHPDAFYLARTAKALQAHWQLMKQYYLLEDQTVQPLPKGDQVLNFSDAEDLIDDSKLKDMRDEVLEHELMVADRRQKREIRQLEQELHKWQVLVDSITGMSSPDFDNQTLAVLRGRMVRYLMRSREITLGRATKDNQIDVDLSLEGPAWKISRKQGVIKLKNNGDFFIANEGRRPIYIDGRPVLCGSKWRLSNNSVVEIASLRFVFLINQDLIALIRAEAAKITPQ.

M1 is subject to N-acetylmethionine. The interval 1 to 130 (MDKDSQGLLD…KSKQPLQVTK (130 aa)) is disordered. Residue S22 is modified to Phosphoserine. Residues 43–55 (PKRRSSSRFIKRK) show a composition bias toward basic residues. S102 is modified (phosphoserine). T103 carries the post-translational modification Phosphothreonine. Over residues 103–112 (TPVPPSPAPA) the composition is skewed to pro residues. At S108 the chain carries Phosphoserine. The Nuclear localization signal signature appears at 113 to 123 (PGLTKRVKKSK). Residues K123 and K130 each carry the N6-acetyllysine modification. Position 282 is a phosphoserine (S282). Residues 301–335 (LEHELMVADRRQKREIRQLEQELHKWQVLVDSITG) adopt a coiled-coil conformation. Residues 363–419 (ITLGRATKDNQIDVDLSLEGPAWKISRKQGVIKLKNNGDFFIANEGRRPIYIDGRPV) form the FHA domain. The UBR5-degron motif lies at 389–396 (RKQGVIKL).

In terms of assembly, component of the chromatin remodeling INO80 complex; specifically part of a complex module associated with the N-terminus of INO80. Component of some MLL1/MLL complex, at least composed of the core components KMT2A/MLL1, ASH2L, HCFC1, WDR5 and RBBP5, as well as the facultative components BACC1, CHD8, E2F6, HSP70, INO80C, KANSL1, LAS1L, MAX, MCRS1, MGA, KAT8/MOF, PELP1, PHF20, PRP31, RING2, RUVB1/TIP49A, RUVB2/TIP49B, SENP3, TAF1, TAF4, TAF6, TAF7, TAF9 and TEX10. Component of the NSL complex at least composed of MOF/KAT8, KANSL1, KANSL2, KANSL3, MCRS1, PHF20, OGT1/OGT, WDR5 and HCFC1. Interacts with NOP2. Interacts with PINX1. Interacts with TERT. Interacts with CCDC85B. Interacts with DAXX. Interacts (via N-terminus) with FMR1 (via phosphorylated form). Interacts with FXR1 and FXR2. Interacts (via C-terminus) with NDE1 (via C-terminus); phosphorylation of NDE1 inhibits the interaction. Interacts (via C-terminus) with ZNF375. Interacts (via C-terminus) with active GTP-bound RHEB (via N-terminus) under conditions of high amino acid concentration; the interaction promotes mTORC1 complex activation by RHEB. Interacts (via N-terminus) with the mTORC1 complex; the interaction ensures mTORC1 activation by RHEB. Interacts with DYNC1I1; the interaction is required for the proper distribution of centriolar satellites. Interacts with TTBK2; the interaction is required for recruitment of TTBK2 to the mother centriole. Interacts with KIF2A; the interaction occurs during mitosis and facilitates chromosome alignment. As to quaternary structure, (Microbial infection) Interacts with Herpes simplex virus ICP22. Ubiquitinated by UBR5 when not assembled in the INO80 complex, leading to its degradation: UBR5 recognizes and binds a degron that is not accessible when MCRS1 is part of the INO80 complex. In terms of processing, phosphorylated by AURKA on Ser-35 and/or Ser-36 during mitosis which is required for kinetochore fiber assembly and mitotic progression but not for spindle localization or for chromosome-induced microtuble aster formation. Also phosphorylated by AURKA on Ser-85 and/or Ser-87. Phosphorylated by TTK/MPS1 which enhances recruitment of KIF2A to the minus end of spindle microtubules and facilitates precise chromosome segregation. As to expression, detected in testis, and at lower levels in spleen, thymus, prostate, uterus, small intestine, colon and leukocytes.

It localises to the nucleus. It is found in the nucleolus. The protein localises to the cytoplasm. Its subcellular location is the cytoskeleton. The protein resides in the microtubule organizing center. It localises to the centrosome. It is found in the spindle pole. The protein localises to the chromosome. Its subcellular location is the centromere. The protein resides in the kinetochore. It localises to the lysosome. It is found in the centriolar satellite. Modulates the transcription repressor activity of DAXX by recruiting it to the nucleolus. As part of the NSL complex, may be involved in acetylation of nucleosomal histone H4 on several lysine residues. Putative regulatory component of the chromatin remodeling INO80 complex which is involved in transcriptional regulation, DNA replication and probably DNA repair. May also be an inhibitor of TERT telomerase activity. Binds to G-quadruplex structures in mRNA. Binds to RNA homomer poly(G) and poly(U). Maintains RHEB at the lysosome in its active GTP-bound form and prevents its interaction with the mTORC1 complex inhibitor TSC2, ensuring activation of the mTORC1 complex by RHEB. Stabilizes the minus ends of kinetochore fibers by protecting them from depolymerization, ensuring functional spindle assembly during mitosis. Following phosphorylation by TTK/MPS1, enhances recruitment of KIF2A to the minus ends of mitotic spindle microtubules which promotes chromosome alignment. Regulates the morphology of microtubule minus ends in mitotic spindle by maintaining them in a closed conformation characterized by the presence of an electron-dense cap. Regulates G2/M transition and spindle assembly during oocyte meiosis. Mediates histone modifications and transcriptional regulation in germinal vesicle oocytes which are required for meiotic progression. Also regulates microtubule nucleation and spindle assembly by activating aurora kinases during oocyte meiosis. Contributes to the establishment of centriolar satellites and also plays a role in primary cilium formation by recruiting TTBK2 to the mother centriole which is necessary for removal of the CP110 cap from the mother centriole, an early step in ciliogenesis. Required for epiblast development during early embryogenesis. Essential for cell viability. This is Microspherule protein 1 (MCRS1) from Homo sapiens (Human).